The primary structure comprises 700 residues: Putative proline-rich receptor-like protein kinase PERK6 (700 aa).

A disordered region spans residues 1 to 180 (MAEGQSPENS…SGGGSNSSGN (180 aa)). At 1–186 (MAEGQSPENS…SSGNNEPNTA (186 aa)) the chain is on the extracellular side. Pro residues-rich tracts occupy residues 9–19 (NSPPSPTPPSP) and 29–47 (SPPPSDSSSPSPPAPPPPD). Residues 48 to 137 (DSSNGSPQPP…GNNNDNNNQN (90 aa)) show a composition bias toward low complexity. The N-linked (GlcNAc...) asparagine glycan is linked to Asn-176. Residues 187 to 207 (AIVGIVAGAGLLFLVMILFCV) form a helical membrane-spanning segment. Topologically, residues 208-700 (CCCRKKKKKH…NNKTTPSRDH (493 aa)) are cytoplasmic. Residues 249-315 (NLSQQYPGSN…GPSVPPPHPS (67 aa)) form a disordered region. Positions 255-265 (PGSNGNNNWMN) are enriched in low complexity. Residues 266 to 286 (SPPPPPPGSWQPSPPPPPPPV) show a composition bias toward pro residues. Residue Thr-326 is modified to Phosphothreonine. Residues 337–615 (FSQSRLLGQG…VRALEGDATL (279 aa)) form the Protein kinase domain. ATP contacts are provided by residues 343–351 (LGQGGFGYV) and Lys-365. Phosphotyrosine is present on Tyr-410. Residue Asp-461 is the Proton acceptor of the active site. Phosphoserine occurs at positions 465 and 494. 2 positions are modified to phosphothreonine: Thr-495 and Thr-500. Residue Tyr-508 is modified to Phosphotyrosine. 2 disordered regions span residues 616-642 (DDLSEGGKAGQSSFLGRGSSSDYDSST) and 659-700 (EYGA…SRDH). Polar residues predominate over residues 689 to 700 (ANNNKTTPSRDH).

It belongs to the protein kinase superfamily. Ser/Thr protein kinase family. As to expression, mostly expressed in flower buds.

Its subcellular location is the cell membrane. It catalyses the reaction L-seryl-[protein] + ATP = O-phospho-L-seryl-[protein] + ADP + H(+). The catalysed reaction is L-threonyl-[protein] + ATP = O-phospho-L-threonyl-[protein] + ADP + H(+). The chain is Putative proline-rich receptor-like protein kinase PERK6 (PERK6) from Arabidopsis thaliana (Mouse-ear cress).